Consider the following 265-residue polypeptide: Homeobox protein engrailed-2-B (265 aa).

Basic and acidic residues-rich tracts occupy residues 1–12 and 102–115; these read MEENEQNNREVE and GEKK…ETLK. Disordered stretches follow at residues 1-38, 60-138, and 156-182; these read MEEN…QPHH, INHQ…SSKA, and DRPS…PRTA. Low complexity predominate over residues 122–136; it reads DHSLSSDSDSSQASS. A DNA-binding region (homeobox) is located at residues 176-235; it reads DKRPRTAFTAEQLQRLKAEFQTNRYLTEQRRQSLAQELGLNESQIKIWFQNKRAKIKKST.

It belongs to the engrailed homeobox family.

It localises to the nucleus. The sequence is that of Homeobox protein engrailed-2-B (en2-b) from Xenopus laevis (African clawed frog).